The primary structure comprises 376 residues: Mitogen-activated protein kinase 2 (376 aa).

Positions 32–319 constitute a Protein kinase domain; sequence YVPIKPIGRG…VTEALQHPYM (288 aa). Residues 38–46 and K61 contribute to the ATP site; that span reads IGRGAYGVV. The active-site Proton acceptor is the D158. T191 bears the Phosphothreonine mark. A TXY motif is present at residues 191-193; it reads TEY. Residue Y193 is modified to Phosphotyrosine. Position 196 is a phosphothreonine (T196).

It belongs to the protein kinase superfamily. CMGC Ser/Thr protein kinase family. MAP kinase subfamily. In terms of assembly, interacts with MKK3. In terms of processing, dually phosphorylated on Thr-191 and Tyr-193, which activates the enzyme. Phosphorylated on Ser residue. As to expression, highest levels in the stem. Present in the leaf, root and flower, but not in seeds.

The enzyme catalyses L-seryl-[protein] + ATP = O-phospho-L-seryl-[protein] + ADP + H(+). The catalysed reaction is L-threonyl-[protein] + ATP = O-phospho-L-threonyl-[protein] + ADP + H(+). Activated by threonine and tyrosine phosphorylation. The sequence is that of Mitogen-activated protein kinase 2 (MPK2) from Arabidopsis thaliana (Mouse-ear cress).